Reading from the N-terminus, the 440-residue chain is Protein arginine N-methyltransferase 2 (440 aa).

The interval leucine 147–lysine 194 is disordered. A compositionally biased stretch (acidic residues) spans glutamate 152–alanine 168. Positions glutamate 182–lysine 194 are enriched in basic and acidic residues. One can recognise an RMT2 domain in the interval lysine 192–leucine 440. S-adenosyl-L-methionine is bound by residues tyrosine 201, methionine 230, phenylalanine 252–valine 257, glutamate 273–histidine 275, tryptophan 310–glutamine 311, and aspartate 330.

This sequence belongs to the class I-like SAM-binding methyltransferase superfamily. RMT2 methyltransferase family. Monomer.

It is found in the cytoplasm. Its subcellular location is the nucleus. Its function is as follows. S-adenosyl-L-methionine-dependent protein-arginine N-methyltransferase that methylates the delta-nitrogen atom of arginine residues to form N5-methylarginine (type IV) in target proteins. Monomethylates ribosomal protein L12. The sequence is that of Protein arginine N-methyltransferase 2 from Gibberella zeae (strain ATCC MYA-4620 / CBS 123657 / FGSC 9075 / NRRL 31084 / PH-1) (Wheat head blight fungus).